A 416-amino-acid polypeptide reads, in one-letter code: Gamma-glutamyl phosphate reductase (416 aa).

It belongs to the gamma-glutamyl phosphate reductase family.

It localises to the cytoplasm. The enzyme catalyses L-glutamate 5-semialdehyde + phosphate + NADP(+) = L-glutamyl 5-phosphate + NADPH + H(+). Its pathway is amino-acid biosynthesis; L-proline biosynthesis; L-glutamate 5-semialdehyde from L-glutamate: step 2/2. Its function is as follows. Catalyzes the NADPH-dependent reduction of L-glutamate 5-phosphate into L-glutamate 5-semialdehyde and phosphate. The product spontaneously undergoes cyclization to form 1-pyrroline-5-carboxylate. In Vibrio parahaemolyticus serotype O3:K6 (strain RIMD 2210633), this protein is Gamma-glutamyl phosphate reductase.